Consider the following 316-residue polypeptide: DMOA farnesyltransferase nvfB (316 aa).

Transmembrane regions (helical) follow at residues 47–67 (VVGV…TILL), 71–91 (LILV…NDVI), 115–135 (WNAV…LSFL), 139–159 (CAIE…GKRF), 162–182 (FPQL…HSLG), 191–211 (PTFF…VVYS), 234–254 (IELL…AAGY), 258–278 (LGIP…LYFL), and 294–314 (KLAC…EYYL).

This sequence belongs to the UbiA prenyltransferase family.

The protein resides in the membrane. It carries out the reaction 3,5-dimethylorsellinate + (2E,6E)-farnesyl diphosphate = (3R)-3-farnesyl-6-hydroxy-2,3,5-trimethyl-4-oxocyclohexa-1,5-diene-1-carboxylate + diphosphate + H(+). It functions in the pathway secondary metabolite biosynthesis; terpenoid biosynthesis. Its function is as follows. DMOA farnesyltransferase; part of the gene cluster that mediates the biosynthesis of novofumigatonin, a heavily oxygenated meroterpenoid containing a unique orthoester moiety. The first step of the pathway is the synthesis of 3,5-dimethylorsellinic acid (DMOA) by the polyketide synthase nvfA via condensation of one acetyl-CoA starter unit with 3 malonyl-CoA units and 2 methylations. DMOA is then converted to farnesyl-DMOA by the farnesyltransferase nvfB. Epoxydation by FAD-dependent monooxygenase nvfK, followed by a protonation-initiated cyclization catalyzed by the terpene cyclase nvfL leads to the production of asnavolin H. The short chain dehydrogenase nvfC then as a 3-OH dehydrogenase of asnovolin H to yield chemesin D. There are two branches to synthesize asnovolin A from chemesin D. In one branch, chemesin D undergoes Baeyer-Villiger oxidation by nvfH, methylation by nvfJ, and enoyl reduction by the nvfM D enoylreductase that reduces the double bond between C-5'and C-6', to form respectively asnovolin I, asnovolin K, and asnovolin A. In the other branch, the methylation precedes the Baeyer-Villiger oxidation and the enoyl reduction to yield asnovolin A via the asnovolin J intermediate. Asnovolin A is further converted to fumigatonoid A by the Fe(II)/2-oxoglutarate-dependent dioxygenase nvfI that catalyzes an endoperoxidation reaction. The alpha/beta hydrolase nvfD then acts as an epimerase that converts fumigatonoid A to its C-5' epimer, which then undergoes spontaneous or nvfD-catalyzed lactonization. The following step utilizes the ketoreductase nvfG to produce fumigatonoid B. The dioxygenase nvfE further converts fumigatonoid B into fumigatonoid C. Finally the Fe(II)/2-oxoglutarate-dependent dioxygenase nvfF catalyzes two rounds of oxidation to transform fumigatonoid C into the end product, novofumigatonin A. This chain is DMOA farnesyltransferase nvfB, found in Aspergillus novofumigatus (strain IBT 16806).